A 687-amino-acid polypeptide reads, in one-letter code: MPYKINRMKNSLEINETGGTLLVDERKRLRIGELYRYKFSVNKDVIKEQGLDVSHLFLRIKNEESALLRPLYLTGPYSFYIDVRPHNYNENRKFPGKEIIPFVENLKPDERFKVKILLNENSRVGDTSLYSWTIDIISQLAVTTIPKLEFSFRIGTTRKVVKKSNGLFKSIEGVSLEMWDTETLWDLPPKFPEKPVHLVIMTHGIFSNIGCDMLYMKDKIEEMTFPMDESINPNIIVRGFMGNVGKSGHGIHCLGVRVGKYVLETVDKLNKKYKVDRISFIGHSLGGPTQSMAVRYISIKRPDFFDAVKGVKPVNFITLASPFIGVIGDFPFYLSVPLDMGALGLTGRDLNLKYTPLTSKDGLYADDEVYPEHSKYILEILPQAPAKKVFESFKRRTIYANVMDDGIVPLRTAALLYLDWRSIHKVQKIRKKNKNSPTSSEFVSSDSPESSGASSPSNENGNNVGEIPAESPNKKATLQWTLPQAVIHGSKINKYKRGQTNEANSDSDNEQGVFLDGQKFEPPKEANTVLSALSVLTAAIPDQEYIKNPAVRKDEVIHDKLYHPEELPPPHYENRPIVKKLIYPNESVNRIQERIAREWQETMTWRKVLVQIQPDSHNNIVVRRRFVNLYGYVAVEHMVEHHFGSKVCSELAEDANEPKDEPNQSSQADRSNEYNEGEISKGAENAT.

The active-site Charge relay system is the Ser-284. 3 disordered regions span residues 429-472 (IRKK…AESP), 491-513 (KINK…EQGV), and 650-687 (ELAE…ENAT). Residues 436-463 (SPTSSEFVSSDSPESSGASSPSNENGNN) show a composition bias toward low complexity. Over residues 670–681 (RSNEYNEGEISK) the composition is skewed to basic and acidic residues.

It belongs to the putative lipase ROG1 family.

The protein localises to the cytoplasm. The protein is Putative lipase YDR444W of Saccharomyces cerevisiae (strain ATCC 204508 / S288c) (Baker's yeast).